The chain runs to 123 residues: U11/U12 small nuclear ribonucleoprotein 25 kDa protein (123 aa).

The Ubiquitin-like domain occupies 32 to 123; it reads MTVRVCKMDG…VSFIKKLRQK (92 aa).

In terms of assembly, component of the U11/U12 snRNPs that are part of the U12-type spliceosome.

It is found in the nucleus. The sequence is that of U11/U12 small nuclear ribonucleoprotein 25 kDa protein (SNRNP25) from Bos taurus (Bovine).